We begin with the raw amino-acid sequence, 215 residues long: MKLVLMGLPGAGKGTQAEQIVEKYNIPHISTGDMFRAAMKNNTELGKKAKSFMDNGDLVPDEVTNGIVRERLAEDDAKNGFLLDGFPRTVEQAEELENILNDLGTELDAVINIEVDKDVLMKRLTGRWICRTCGKTYHEIYNPPKVPGKCDLDGGELYQRDDDKKETVEKRLNVNMKQTKPLLDFYSEKGKLHNINGEQDIKDVFVDVEKILASF.

Position 10 to 15 (10 to 15) interacts with ATP; that stretch reads GAGKGT. The NMP stretch occupies residues 30–59; sequence STGDMFRAAMKNNTELGKKAKSFMDNGDLV. AMP-binding positions include Thr-31, Arg-36, 57–59, 85–88, and Gln-92; these read DLV and GFPR. Residues 126-163 are LID; that stretch reads GRWICRTCGKTYHEIYNPPKVPGKCDLDGGELYQRDDD. Arg-127 provides a ligand contact to ATP. Zn(2+) contacts are provided by Cys-130 and Cys-133. 136–137 serves as a coordination point for ATP; that stretch reads TY. Zn(2+) is bound by residues Cys-150 and Asp-153. AMP-binding residues include Arg-160 and Arg-171. Position 199 (Gln-199) interacts with ATP.

Belongs to the adenylate kinase family. As to quaternary structure, monomer.

The protein localises to the cytoplasm. It catalyses the reaction AMP + ATP = 2 ADP. Its pathway is purine metabolism; AMP biosynthesis via salvage pathway; AMP from ADP: step 1/1. Functionally, catalyzes the reversible transfer of the terminal phosphate group between ATP and AMP. Plays an important role in cellular energy homeostasis and in adenine nucleotide metabolism. This Listeria monocytogenes serotype 4b (strain CLIP80459) protein is Adenylate kinase.